Reading from the N-terminus, the 77-residue chain is Probable [Fe-S]-dependent transcriptional repressor (77 aa).

4 residues coordinate iron-sulfur cluster: C54, C59, C62, and C68.

This sequence belongs to the FeoC family.

Functionally, may function as a transcriptional regulator that controls feoABC expression. This Proteus mirabilis (strain HI4320) protein is Probable [Fe-S]-dependent transcriptional repressor.